Here is a 252-residue protein sequence, read N- to C-terminus: Urease accessory protein UreD (252 aa).

Belongs to the UreD family. In terms of assembly, ureD, UreF and UreG form a complex that acts as a GTP-hydrolysis-dependent molecular chaperone, activating the urease apoprotein by helping to assemble the nickel containing metallocenter of UreC. The UreE protein probably delivers the nickel.

The protein localises to the cytoplasm. Its function is as follows. Required for maturation of urease via the functional incorporation of the urease nickel metallocenter. This is Urease accessory protein UreD from Streptomyces avermitilis (strain ATCC 31267 / DSM 46492 / JCM 5070 / NBRC 14893 / NCIMB 12804 / NRRL 8165 / MA-4680).